Here is a 957-residue protein sequence, read N- to C-terminus: Plasma membrane ATPase 1 (957 aa).

Over 1-66 (MGEEKPEVLD…EKKDSKLLKF (66 aa)) the chain is Cytoplasmic. The chain crosses the membrane as a helical span at residues 67-86 (LGFMWNPLSWVMEAAAIMAI). Residues 87–98 (ALANGGGKPPDW) lie on the Extracellular side of the membrane. Residues 99–119 (QDFVGIITLLIINSTISFIEE) traverse the membrane as a helical segment. The Cytoplasmic portion of the chain corresponds to 120–248 (NNAGNAAAAL…GHFQKVLTAI (129 aa)). The helical transmembrane segment at 249 to 269 (GNFCICSIAVGMIIEIIVMYP) threads the bilayer. Residues 270–279 (IQHRAYRPGI) are Extracellular-facing. A helical transmembrane segment spans residues 280–301 (DNLLVLLIGGIPIAMPTVLSVT). At 302–648 (MAIGSHRLAQ…TSRAIFQRMK (347 aa)) the chain is on the cytoplasmic side. D334 functions as the 4-aspartylphosphate intermediate in the catalytic mechanism. D593 and D597 together coordinate Mg(2+). Residues 649–670 (NYTIYAVSITIRIVLGFMLLAL) traverse the membrane as a helical segment. The Extracellular portion of the chain corresponds to 671–675 (IWKFD). A helical transmembrane segment spans residues 676 to 698 (FPPFMVLIIAILNDGTIMTISKD). Residues 699–714 (RVKPSPLPDSWKLAEI) lie on the Cytoplasmic side of the membrane. Residues 715–735 (FTTGIVLGGYLAMMTVIFFWA) traverse the membrane as a helical segment. Residues 736–760 (AYKTNFFPHVFGVSTLEKTATDDFR) are Extracellular-facing. The chain crosses the membrane as a helical span at residues 761–781 (KLASAIYLQVSIISQALIFVT). Residues 782 to 793 (RSRSWSFVERPG) are Cytoplasmic-facing. Residues 794–814 (FLLVIAFVIAQLVATLIAVYA) traverse the membrane as a helical segment. Topologically, residues 815-823 (NWSFAAIEG) are extracellular. The chain crosses the membrane as a helical span at residues 824–844 (IGWGWAGVIWIYNLVFYIPLD). At 845–957 (IIKFFIRYAL…IETIQQAYTV (113 aa)) the chain is on the cytoplasmic side.

The protein belongs to the cation transport ATPase (P-type) (TC 3.A.3) family. Type IIIA subfamily. As to expression, expressed in roots, stems, leaves from both vegetative and flowering plants, and flowers at early and late stages of development with highest expression levels found in flowers and stem.

The protein localises to the cell membrane. It catalyses the reaction ATP + H2O + H(+)(in) = ADP + phosphate + 2 H(+)(out). In terms of biological role, the plasma membrane ATPase of plants and fungi is a hydrogen ion pump. The proton gradient it generates drives the active transport of nutrients by H(+)-symport. The resulting external acidification and/or internal alkinization may mediate growth responses. This chain is Plasma membrane ATPase 1 (PMA1), found in Nicotiana plumbaginifolia (Leadwort-leaved tobacco).